The chain runs to 691 residues: F-box/LRR-repeat protein 5 (691 aa).

Residues 1 to 159 (MAPFPEEVDV…IKKKVIAQHC (159 aa)) form a hemerythrin-like region. Residues H15, H57, E58, E61, H80, H126, and E130 each contribute to the Fe(3+) site. The F-box domain occupies 202–248 (STGITHLPPEVMVSIFSYLNPQELCRCSQVSTKWSQLAKTGSLWKHL). LRR repeat units lie at residues 340 to 364 (SSAV…LDLT), 365 to 392 (QTDI…DLSG), 393 to 418 (CEKI…ESGL), 479 to 508 (VWML…CVME), 576 to 607 (TRLL…SLSG), 608 to 635 (CYQI…NLSG), and 636 to 661 (CLTV…YFYY). Residues C662, C676, C686, and C687 each contribute to the [2Fe-2S] cluster site.

As to quaternary structure, part of a SCF (SKP1-cullin-F-box) protein ligase complex. Interacts with ACO1/IRP1, IREB2/IRP2; the interaction depends on the [2Fe-2S] cluster. Interacts with DCTN1/p150-glued. Requires [2Fe-2S] cluster as cofactor. Polybiquitinated upon iron and oxygen depletion, leading to its degradation by the proteasome. Ubiquitination is regulated by the hemerythrin-like region that acts as an oxygen and iron sensor. Undergoes constitutive ubiquitin-dependent degradation at the steady state by HERC2.

Its subcellular location is the cytoplasm. It localises to the perinuclear region. The protein resides in the nucleus. It functions in the pathway protein modification; protein ubiquitination. An iron-sulfur cluster promotes IRP2 polyubiquitination and degradation in response to both iron and oxygen concentrations. In terms of biological role, component of some SCF (SKP1-cullin-F-box) protein ligase complex that plays a central role in iron homeostasis by promoting the ubiquitination and subsequent degradation of IREB2/IRP2. The C-terminal domain of FBXL5 contains a redox-sensitive [2Fe-2S] cluster that, upon oxidation, promotes binding to IRP2 to effect its oxygen-dependent degradation. Under iron deficiency conditions, the N-terminal hemerythrin-like (Hr) region, which contains a diiron metal center, cannot bind iron and undergoes conformational changes that destabilize the FBXL5 protein and cause its ubiquitination and degradation. When intracellular iron levels start rising, the Hr region is stabilized. Additional increases in iron levels facilitate the assembly and incorporation of a redox active [2Fe-2S] cluster in the C-terminal domain. Only when oxygen level is high enough to maintain the cluster in its oxidized state can FBXL5 recruit IRP2 as a substrate for polyubiquination and degradation. Promotes ubiquitination and subsequent degradation of the dynactin complex component DCTN1. Within the nucleus, promotes the ubiquitination of SNAI1; preventing its interaction with DNA and promoting its degradation. Negatively regulates DNA damage response by mediating the ubiquitin-proteasome degradation of the DNA repair protein NABP2. This is F-box/LRR-repeat protein 5 (FBXL5) from Bos taurus (Bovine).